The primary structure comprises 182 residues: Probable inosine/xanthosine triphosphatase (182 aa).

Residues Glu42 and Asp69 each coordinate Mg(2+).

The protein belongs to the YjjX NTPase family. In terms of assembly, homodimer. It depends on Mg(2+) as a cofactor. Mn(2+) is required as a cofactor.

The enzyme catalyses XTP + H2O = XDP + phosphate + H(+). It catalyses the reaction ITP + H2O = IDP + phosphate + H(+). In terms of biological role, phosphatase that hydrolyzes non-canonical purine nucleotides such as XTP and ITP to their respective diphosphate derivatives. Probably excludes non-canonical purines from DNA/RNA precursor pool, thus preventing their incorporation into DNA/RNA and avoiding chromosomal lesions. The protein is Probable inosine/xanthosine triphosphatase of Methanothermobacter thermautotrophicus (strain ATCC 29096 / DSM 1053 / JCM 10044 / NBRC 100330 / Delta H) (Methanobacterium thermoautotrophicum).